The following is a 396-amino-acid chain: 1-deoxy-D-xylulose 5-phosphate reductoisomerase (396 aa).

Residues T15, G16, S17, I18, G41, and N129 each coordinate NADPH. K130 is a binding site for 1-deoxy-D-xylulose 5-phosphate. E131 serves as a coordination point for NADPH. D155 provides a ligand contact to Mn(2+). 1-deoxy-D-xylulose 5-phosphate is bound by residues S156, E157, S182, and H205. Mn(2+) is bound at residue E157. G211 lines the NADPH pocket. The 1-deoxy-D-xylulose 5-phosphate site is built by S218, N223, K224, and E227. E227 provides a ligand contact to Mn(2+).

The protein belongs to the DXR family. Requires Mg(2+) as cofactor. Mn(2+) serves as cofactor.

It carries out the reaction 2-C-methyl-D-erythritol 4-phosphate + NADP(+) = 1-deoxy-D-xylulose 5-phosphate + NADPH + H(+). It functions in the pathway isoprenoid biosynthesis; isopentenyl diphosphate biosynthesis via DXP pathway; isopentenyl diphosphate from 1-deoxy-D-xylulose 5-phosphate: step 1/6. In terms of biological role, catalyzes the NADPH-dependent rearrangement and reduction of 1-deoxy-D-xylulose-5-phosphate (DXP) to 2-C-methyl-D-erythritol 4-phosphate (MEP). The polypeptide is 1-deoxy-D-xylulose 5-phosphate reductoisomerase (Xanthomonas axonopodis pv. citri (strain 306)).